A 440-amino-acid chain; its full sequence is Ribosomal protein uS12 methylthiotransferase RimO (440 aa).

Residues 8 to 124 (TSVFLLSLGC…VLDALGARYH (117 aa)) form the MTTase N-terminal domain. [4Fe-4S] cluster contacts are provided by C17, C53, C87, C148, C152, and C155. In terms of domain architecture, Radical SAM core spans 134–363 (LTPPHSSYLK…MELQEEIARK (230 aa)). The TRAM domain maps to 366 to 437 (EAFVGSLMTV…AYELHGTVES (72 aa)).

Belongs to the methylthiotransferase family. RimO subfamily. It depends on [4Fe-4S] cluster as a cofactor.

It localises to the cytoplasm. It catalyses the reaction L-aspartate(89)-[ribosomal protein uS12]-hydrogen + (sulfur carrier)-SH + AH2 + 2 S-adenosyl-L-methionine = 3-methylsulfanyl-L-aspartate(89)-[ribosomal protein uS12]-hydrogen + (sulfur carrier)-H + 5'-deoxyadenosine + L-methionine + A + S-adenosyl-L-homocysteine + 2 H(+). Catalyzes the methylthiolation of an aspartic acid residue of ribosomal protein uS12. This is Ribosomal protein uS12 methylthiotransferase RimO from Chlorobium luteolum (strain DSM 273 / BCRC 81028 / 2530) (Pelodictyon luteolum).